The sequence spans 415 residues: G2/mitotic-specific cyclin cig1 (415 aa).

Disordered stretches follow at residues Pro54 to Glu74 and Glu86 to His118. Over residues Ile57–Asp71 the composition is skewed to low complexity. Phosphoserine is present on Ser96.

This sequence belongs to the cyclin family. Cyclin G subfamily.

In terms of biological role, required for efficient passage of the G1/S transition. This Schizosaccharomyces pombe (strain 972 / ATCC 24843) (Fission yeast) protein is G2/mitotic-specific cyclin cig1 (cig1).